Consider the following 425-residue polypeptide: UDP-N-acetylglucosamine 1-carboxyvinyltransferase (425 aa).

25–26 (KN) lines the phosphoenolpyruvate pocket. A UDP-N-acetyl-alpha-D-glucosamine-binding site is contributed by Arg-95. The Proton donor role is filled by Cys-119. Cys-119 carries the post-translational modification 2-(S-cysteinyl)pyruvic acid O-phosphothioketal. UDP-N-acetyl-alpha-D-glucosamine is bound by residues 124–128 (RPVDQ), Asp-306, and Ile-328.

It belongs to the EPSP synthase family. MurA subfamily.

It localises to the cytoplasm. The enzyme catalyses phosphoenolpyruvate + UDP-N-acetyl-alpha-D-glucosamine = UDP-N-acetyl-3-O-(1-carboxyvinyl)-alpha-D-glucosamine + phosphate. It participates in cell wall biogenesis; peptidoglycan biosynthesis. Its function is as follows. Cell wall formation. Adds enolpyruvyl to UDP-N-acetylglucosamine. The polypeptide is UDP-N-acetylglucosamine 1-carboxyvinyltransferase (Thermus thermophilus (strain ATCC BAA-163 / DSM 7039 / HB27)).